The sequence spans 202 residues: CASP-like protein 2B1 (202 aa).

The Cytoplasmic portion of the chain corresponds to Met1–Arg29. A helical transmembrane segment spans residues Leu30–Val50. The Extracellular segment spans residues Gly51 to Lys72. A helical membrane pass occupies residues Ala73–Val93. Topologically, residues Arg94–Pro109 are cytoplasmic. The chain crosses the membrane as a helical span at residues Leu110–Ala130. At Ala131–Glu164 the chain is on the extracellular side. Residues Gly165–Phe185 form a helical membrane-spanning segment. Residues Ser186–Trp202 lie on the Cytoplasmic side of the membrane.

Belongs to the Casparian strip membrane proteins (CASP) family. Homodimer and heterodimers.

The protein resides in the cell membrane. This chain is CASP-like protein 2B1, found in Ricinus communis (Castor bean).